The chain runs to 78 residues: Large ribosomal subunit protein bL28 (78 aa).

The protein belongs to the bacterial ribosomal protein bL28 family.

The chain is Large ribosomal subunit protein bL28 from Prochlorococcus marinus (strain MIT 9301).